A 131-amino-acid polypeptide reads, in one-letter code: Small nuclear ribonucleoprotein SmD3b (131 aa).

The Sm domain occupies 7-79 (IPVKLLHEAS…VRFMVIPDIL (73 aa)). The disordered stretch occupies residues 96 to 131 (SSSLGVGRGRGAMRGKPAAGPGRGTGGRGAVPPVRR).

This sequence belongs to the snRNP core protein family. As to expression, expressed in young seedlings, roots, leaves, flowers and immature siliques.

It localises to the cytoplasm. The protein resides in the cytosol. The protein localises to the nucleus. Core component of the spliceosomal U1, U2, U4 and U5 small nuclear ribonucleoproteins (snRNPs), the building blocks of the spliceosome. May play a major role in the splicing of cellular pre-mRNAs. Required for normal plant development. The chain is Small nuclear ribonucleoprotein SmD3b from Arabidopsis thaliana (Mouse-ear cress).